Consider the following 203-residue polypeptide: Glycerol-3-phosphate acyltransferase (203 aa).

Transmembrane regions (helical) follow at residues 4-24, 68-88, 104-124, and 125-145; these read LTFA…AVLI, IPVY…FIGI, GGKG…DMGS, and FMIV…LAAI.

It belongs to the PlsY family. As to quaternary structure, probably interacts with PlsX.

It is found in the cell inner membrane. It catalyses the reaction an acyl phosphate + sn-glycerol 3-phosphate = a 1-acyl-sn-glycero-3-phosphate + phosphate. It functions in the pathway lipid metabolism; phospholipid metabolism. In terms of biological role, catalyzes the transfer of an acyl group from acyl-phosphate (acyl-PO(4)) to glycerol-3-phosphate (G3P) to form lysophosphatidic acid (LPA). This enzyme utilizes acyl-phosphate as fatty acyl donor, but not acyl-CoA or acyl-ACP. This chain is Glycerol-3-phosphate acyltransferase, found in Tolumonas auensis (strain DSM 9187 / NBRC 110442 / TA 4).